The following is a 519-amino-acid chain: Iroquois-class homeodomain protein IRX-4 (519 aa).

Positions 143–204 (GTRRKNATRE…NARRRLKKEN (62 aa)) form a DNA-binding region, homeobox; TALE-type. A disordered region spans residues 204–298 (NKMTWPPRNK…VPAAPDGPVK (95 aa)). A compositionally biased stretch (basic and acidic residues) spans 213-222 (KCADEKRPYA). Acidic residues-rich tracts occupy residues 223–235 (EGEE…EEAR) and 257–267 (LSDLDDFDPLE).

The protein belongs to the TALE/IRO homeobox family. Interacts with the vitamin D receptor VDR but doesn't affect its transactivation activity. As to expression, predominantly expressed in cardiac ventricles.

The protein localises to the nucleus. In terms of biological role, likely to be an important mediator of ventricular differentiation during cardiac development. The chain is Iroquois-class homeodomain protein IRX-4 (IRX4) from Homo sapiens (Human).